The following is a 371-amino-acid chain: Dual-specificity RNA methyltransferase RlmN (371 aa).

The active-site Proton acceptor is the Glu-92. The region spanning 98–337 (EADRATLCVS…VTVRKTRGDD (240 aa)) is the Radical SAM core domain. Cys-105 and Cys-342 form a disulfide bridge. The [4Fe-4S] cluster site is built by Cys-112, Cys-116, and Cys-119. S-adenosyl-L-methionine contacts are provided by residues 166 to 167 (GE), Ser-198, 220 to 222 (SLH), and Asn-299. The active-site S-methylcysteine intermediate is Cys-342.

Belongs to the radical SAM superfamily. RlmN family. It depends on [4Fe-4S] cluster as a cofactor.

It localises to the cytoplasm. The catalysed reaction is adenosine(2503) in 23S rRNA + 2 reduced [2Fe-2S]-[ferredoxin] + 2 S-adenosyl-L-methionine = 2-methyladenosine(2503) in 23S rRNA + 5'-deoxyadenosine + L-methionine + 2 oxidized [2Fe-2S]-[ferredoxin] + S-adenosyl-L-homocysteine. It carries out the reaction adenosine(37) in tRNA + 2 reduced [2Fe-2S]-[ferredoxin] + 2 S-adenosyl-L-methionine = 2-methyladenosine(37) in tRNA + 5'-deoxyadenosine + L-methionine + 2 oxidized [2Fe-2S]-[ferredoxin] + S-adenosyl-L-homocysteine. In terms of biological role, specifically methylates position 2 of adenine 2503 in 23S rRNA and position 2 of adenine 37 in tRNAs. m2A2503 modification seems to play a crucial role in the proofreading step occurring at the peptidyl transferase center and thus would serve to optimize ribosomal fidelity. In Actinobacillus succinogenes (strain ATCC 55618 / DSM 22257 / CCUG 43843 / 130Z), this protein is Dual-specificity RNA methyltransferase RlmN.